The following is a 101-amino-acid chain: Small ribosomal subunit protein uS14 (101 aa).

This sequence belongs to the universal ribosomal protein uS14 family. As to quaternary structure, part of the 30S ribosomal subunit. Contacts proteins S3 and S10.

Functionally, binds 16S rRNA, required for the assembly of 30S particles and may also be responsible for determining the conformation of the 16S rRNA at the A site. In Shewanella loihica (strain ATCC BAA-1088 / PV-4), this protein is Small ribosomal subunit protein uS14.